The chain runs to 30 residues: Antifungal protein Lap (30 aa).

Displays antifungal activity against M.arachidicola and P.piricola, but not against R.solani, C.gossypii and C.comatus. Inhibits mycelial growth in P.piricola with an IC(50) of 70 nM. Displays very low cell-free translation inhibitory activity in a rabbit reticulocyte lysate system (IC(50)=70 uM) but is able to inhibit HIV-1 reverse transcriptase activity (IC(50)=5.2 nM). This Lyophyllum shimeji (Hon-shimeji) protein is Antifungal protein Lap.